A 290-amino-acid polypeptide reads, in one-letter code: Pyridoxal kinase PdxY (290 aa).

Residues serine 12 and 47–48 (TQ) contribute to the substrate site. Residues aspartate 114, glutamate 151, lysine 184, and 211-214 (RPLL) each bind ATP. Substrate is bound at residue aspartate 225.

This sequence belongs to the pyridoxine kinase family. PdxY subfamily. In terms of assembly, homodimer. Mg(2+) serves as cofactor.

The enzyme catalyses pyridoxal + ATP = pyridoxal 5'-phosphate + ADP + H(+). Its pathway is cofactor metabolism; pyridoxal 5'-phosphate salvage; pyridoxal 5'-phosphate from pyridoxal: step 1/1. Its function is as follows. Pyridoxal kinase involved in the salvage pathway of pyridoxal 5'-phosphate (PLP). Catalyzes the phosphorylation of pyridoxal to PLP. This is Pyridoxal kinase PdxY from Pseudomonas fluorescens (strain Pf0-1).